The following is a 316-amino-acid chain: Transaldolase (316 aa).

K132 acts as the Schiff-base intermediate with substrate in catalysis.

It belongs to the transaldolase family. Type 1 subfamily. As to quaternary structure, homodimer.

Its subcellular location is the cytoplasm. The catalysed reaction is D-sedoheptulose 7-phosphate + D-glyceraldehyde 3-phosphate = D-erythrose 4-phosphate + beta-D-fructose 6-phosphate. It functions in the pathway carbohydrate degradation; pentose phosphate pathway; D-glyceraldehyde 3-phosphate and beta-D-fructose 6-phosphate from D-ribose 5-phosphate and D-xylulose 5-phosphate (non-oxidative stage): step 2/3. Functionally, transaldolase is important for the balance of metabolites in the pentose-phosphate pathway. This is Transaldolase from Aliivibrio fischeri (strain ATCC 700601 / ES114) (Vibrio fischeri).